We begin with the raw amino-acid sequence, 648 residues long: Golgin subfamily A member 8G (648 aa).

Pro residues predominate over residues 1 to 11 (MWPQARLPPHP). Disordered stretches follow at residues 1-84 (MWPQ…SATL) and 119-139 (NKQV…KQKA). The span at 50 to 62 (TNGSIHETATSGG) shows a compositional bias: polar residues. Coiled coils occupy residues 105-160 (VSQL…LNTD), 223-275 (LEQS…MSQE), and 318-424 (EVEL…QQKQ). A compositionally biased stretch (basic and acidic residues) spans 121 to 139 (QVEHQLEEEKKANNEKQKA). Disordered stretches follow at residues 356–376 (LREQ…QEER), 434–461 (ALPG…SIPQ), 508–549 (PITK…GVAA), and 600–624 (PVQG…QDHQ). A compositionally biased stretch (basic and acidic residues) spans 441–453 (GGGHLDSEGEEAP). A compositionally biased stretch (gly residues) spans 521-534 (PGGGHHQAGPGQGG).

It belongs to the GOLGA8 family.

In Homo sapiens (Human), this protein is Golgin subfamily A member 8G.